Here is a 323-residue protein sequence, read N- to C-terminus: Protein translocase subunit SecF (323 aa).

The next 6 membrane-spanning stretches (helical) occupy residues 19–39 (GVIVSAILALLALGLLFFKGF), 138–158 (ILSLILALIAIMVYVSFRYEW), 162–182 (LASVIALVHDVILVASSVIVF), 189–209 (EVIAALLTLIGYSINDTIIIF), 244–264 (LTVFFVVLILCVFGSKIIIGF), and 269–289 (LIGTIVGTYSSIFIAPKVALL).

Belongs to the SecD/SecF family. SecF subfamily. As to quaternary structure, forms a complex with SecD. Part of the essential Sec protein translocation apparatus which comprises SecA, SecYEG and auxiliary proteins SecDF-YajC and YidC.

The protein localises to the cell inner membrane. In terms of biological role, part of the Sec protein translocase complex. Interacts with the SecYEG preprotein conducting channel. SecDF uses the proton motive force (PMF) to complete protein translocation after the ATP-dependent function of SecA. In Helicobacter pylori (strain ATCC 700392 / 26695) (Campylobacter pylori), this protein is Protein translocase subunit SecF.